The following is a 376-amino-acid chain: Phytanoyl-CoA hydroxylase-interacting protein-like (376 aa).

A Fibronectin type-III domain is found at 52–161; it reads VPHNIKISNI…EIIEFCTADY (110 aa).

It belongs to the PHYHIP family.

Functionally, may play a role in the development of the central system. The protein is Phytanoyl-CoA hydroxylase-interacting protein-like (phyhipl) of Xenopus laevis (African clawed frog).